A 470-amino-acid chain; its full sequence is GDP-Man:Man(3)GlcNAc(2)-PP-Dol alpha-1,2-mannosyltransferase (470 aa).

Over 1–15 the chain is Lumenal; the sequence is MSDTVISLISHSITT. A helical membrane pass occupies residues 16–36; that stretch reads VFYLVPLIIALIIPFSLYSGF. Topologically, residues 37-131 are cytoplasmic; that stretch reads RRKSKTVAFF…HYKHCTMLFQ (95 aa). An intramembrane region (helical) is located at residues 132–152; sequence ALAGLILALEAWFRMVPAVFI. The Cytoplasmic portion of the chain corresponds to 153 to 378; sequence DSMGYPLSLP…ISIHTMHNEH (226 aa). The segment at residues 379–399 is an intramembrane region (helical); it reads FGISVVEAMAASTIILSNDSG. Topologically, residues 400-470 are cytoplasmic; the sequence is GPRMDIVKDY…HWNKEIEKVL (71 aa).

This sequence belongs to the glycosyltransferase group 1 family. Glycosyltransferase 4 subfamily.

The protein resides in the endoplasmic reticulum membrane. It catalyses the reaction an alpha-D-Man-(1-&gt;3)-[alpha-D-Man-(1-&gt;6)]-beta-D-Man-(1-&gt;4)-beta-D-GlcNAc-(1-&gt;4)-alpha-D-GlcNAc-diphospho-di-trans,poly-cis-dolichol + 2 GDP-alpha-D-mannose = an alpha-D-Man-(1-&gt;2)-alpha-D-Man-(1-&gt;2)-alpha-D-Man-(1-&gt;3)-[alpha-D-Man-(1-&gt;6)]-beta-D-Man-(1-&gt;4)-beta-D-GlcNAc-(1-&gt;4)-alpha-D-GlcNAc-diphospho-di-trans,poly-cis-dolichol + 2 GDP + 2 H(+). Its pathway is protein modification; protein glycosylation. Functionally, GDP-Man:Man(3)GlcNAc(2)-PP-Dol alpha-1,2-mannosyltransferase that operates in the biosynthetic pathway of dolichol-linked oligosaccharides, the glycan precursors employed in protein asparagine (N)-glycosylation. The assembly of dolichol-linked oligosaccharides begins on the cytosolic side of the endoplasmic reticulum membrane and finishes in its lumen. The sequential addition of sugars to dolichol pyrophosphate produces dolichol-linked oligosaccharides containing fourteen sugars, including two GlcNAcs, nine mannoses and three glucoses. Once assembled, the oligosaccharide is transferred from the lipid to nascent proteins by oligosaccharyltransferases. Catalyzes, on the cytoplasmic face of the endoplasmic reticulum, the addition of the fourth and fifth mannose residues to the dolichol-linked oligosaccharide chain, to produce Man(5)GlcNAc(2)-PP-dolichol core oligosaccharide. Man(5)GlcNAc(2)-PP-dolichol is a substrate for ALG3, the following enzyme in the biosynthetic pathway. The polypeptide is GDP-Man:Man(3)GlcNAc(2)-PP-Dol alpha-1,2-mannosyltransferase (Caenorhabditis elegans).